We begin with the raw amino-acid sequence, 123 residues long: Large ribosomal subunit protein uL22 (123 aa).

The protein belongs to the universal ribosomal protein uL22 family. As to quaternary structure, part of the 50S ribosomal subunit.

Its function is as follows. This protein binds specifically to 23S rRNA; its binding is stimulated by other ribosomal proteins, e.g. L4, L17, and L20. It is important during the early stages of 50S assembly. It makes multiple contacts with different domains of the 23S rRNA in the assembled 50S subunit and ribosome. In terms of biological role, the globular domain of the protein is located near the polypeptide exit tunnel on the outside of the subunit, while an extended beta-hairpin is found that lines the wall of the exit tunnel in the center of the 70S ribosome. The protein is Large ribosomal subunit protein uL22 of Synechococcus sp. (strain JA-3-3Ab) (Cyanobacteria bacterium Yellowstone A-Prime).